We begin with the raw amino-acid sequence, 271 residues long: MPELPEVEVTRQGVSPYLIDNQVTDLIVRNPSLRWPVPEIAKQIIGQTIRNVRRRGKYLLIDTDAGTTIVHLGMSGSLRILPASTPVEKHDHIDLVLASGKALRFNDPRRFGAWLWCELPEQAHPLLSKLGPEPLTDAFNAPYLLAALANKKKAIKLCLMDNHIVVGVGNIYANEALFAAGIHPQAEAGKVDAERIEILVSEVKQILASAIKQGGTTLKDFTNADGKPGYFAQKLHVYGRGGETCTQCGHLLSEIKLGQRATVFCSLCQKL.

Pro-2 acts as the Schiff-base intermediate with DNA in catalysis. Catalysis depends on Glu-3, which acts as the Proton donor. Catalysis depends on Lys-57, which acts as the Proton donor; for beta-elimination activity. 3 residues coordinate DNA: His-90, Arg-109, and Lys-151. The FPG-type zinc-finger motif lies at 236–270; it reads HVYGRGGETCTQCGHLLSEIKLGQRATVFCSLCQK. The Proton donor; for delta-elimination activity role is filled by Arg-260.

It belongs to the FPG family. In terms of assembly, monomer. Requires Zn(2+) as cofactor.

The enzyme catalyses Hydrolysis of DNA containing ring-opened 7-methylguanine residues, releasing 2,6-diamino-4-hydroxy-5-(N-methyl)formamidopyrimidine.. The catalysed reaction is 2'-deoxyribonucleotide-(2'-deoxyribose 5'-phosphate)-2'-deoxyribonucleotide-DNA = a 3'-end 2'-deoxyribonucleotide-(2,3-dehydro-2,3-deoxyribose 5'-phosphate)-DNA + a 5'-end 5'-phospho-2'-deoxyribonucleoside-DNA + H(+). Functionally, involved in base excision repair of DNA damaged by oxidation or by mutagenic agents. Acts as a DNA glycosylase that recognizes and removes damaged bases. Has a preference for oxidized purines, such as 7,8-dihydro-8-oxoguanine (8-oxoG). Has AP (apurinic/apyrimidinic) lyase activity and introduces nicks in the DNA strand. Cleaves the DNA backbone by beta-delta elimination to generate a single-strand break at the site of the removed base with both 3'- and 5'-phosphates. The chain is Formamidopyrimidine-DNA glycosylase from Shewanella halifaxensis (strain HAW-EB4).